The following is a 71-amino-acid chain: Protein SlyX homolog (71 aa).

It belongs to the SlyX family.

The chain is Protein SlyX homolog from Rhodopseudomonas palustris (strain BisB5).